A 422-amino-acid polypeptide reads, in one-letter code: Acylglycerol kinase, mitochondrial (422 aa).

At K6 the chain carries N6-acetyllysine. Residues 15 to 31 (TTAGLCLLTWGGHWLYG) are hydrophobic. One can recognise a DAGKc domain in the interval 58 to 199 (AQVKKATVFL…LDVLQIKGEK (142 aa)). The interval 249–271 (QASISYTGPTERPPNEPEETPVQ) is disordered.

This sequence belongs to the AGK family. As to quaternary structure, component of the TIM22 complex, which core is composed of TIMM22, associated with TIMM10 (TIMM10A and/or TIMM10B), TIMM9, AGK and TIMM29. Interacts with SMIM26. It depends on Mg(2+) as a cofactor. Highly expressed in muscle, heart, kidney and brain.

The protein localises to the mitochondrion inner membrane. Its subcellular location is the mitochondrion intermembrane space. It carries out the reaction a monoacylglycerol + ATP = a monoacyl-sn-glycero-3-phosphate + ADP + H(+). The catalysed reaction is a 1,2-diacyl-sn-glycerol + ATP = a 1,2-diacyl-sn-glycero-3-phosphate + ADP + H(+). The enzyme catalyses an N-acylsphing-4-enine + ATP = an N-acylsphing-4-enine 1-phosphate + ADP + H(+). It catalyses the reaction 1-(9Z-octadecenoyl)-sn-glycerol + ATP = 1-(9Z-octadecenoyl)-sn-glycero-3-phosphate + ADP + H(+). It carries out the reaction 1,2-di-(9Z-octadecenoyl)-sn-glycerol + ATP = 1,2-di-(9Z-octadecenoyl)-sn-glycero-3-phosphate + ADP + H(+). The catalysed reaction is a 1-acyl-sn-glycerol + ATP = a 1-acyl-sn-glycero-3-phosphate + ADP + H(+). The enzyme catalyses 1-hexadecanoyl-sn-glycerol + ATP = 1-hexadecanoyl-sn-glycero-3-phosphate + ADP + H(+). It catalyses the reaction a 2-acylglycerol + ATP = a 2-acyl-sn-glycerol 3-phosphate + ADP + H(+). It carries out the reaction 2-(5Z,8Z,11Z,14Z-eicosatetraenoyl)-glycerol + ATP = 2-(5Z,8Z,11Z,14Z-eicosatetraenoyl)-sn-glycero-3-phosphate + ADP + H(+). The catalysed reaction is 1-(5Z,8Z,11Z,14Z-eicosatetraenoyl)-sn-glycerol + ATP = 1-(5Z,8Z,11Z,14Z-eicosatetraenoyl)-sn-glycero-3-phosphate + ADP + H(+). The enzyme catalyses N-(hexanoyl)sphing-4-enine + ATP = N-hexanoylsphing-4-enine 1-phosphate + ADP + H(+). Its pathway is lipid metabolism; glycerolipid metabolism. In terms of biological role, lipid kinase that can phosphorylate both monoacylglycerol and diacylglycerol to form lysophosphatidic acid (LPA) and phosphatidic acid (PA), respectively. Does not phosphorylate sphingosine. Phosphorylates ceramide. Phosphorylates 1,2-dioleoylglycerol more rapidly than 2,3-dioleoylglycerol. Independently of its lipid kinase activity, acts as a component of the TIM22 complex. The TIM22 complex mediates the import and insertion of multi-pass transmembrane proteins into the mitochondrial inner membrane by forming a twin-pore translocase that uses the membrane potential as the external driving force. In the TIM22 complex, required for the import of a subset of metabolite carriers into mitochondria, such as ANT1/SLC25A4 and SLC25A24, while it is not required for the import of TIMM23. Overexpression increases the formation and secretion of LPA, resulting in transactivation of EGFR and activation of the downstream MAPK signaling pathway, leading to increased cell growth. The protein is Acylglycerol kinase, mitochondrial of Homo sapiens (Human).